Consider the following 427-residue polypeptide: Acyltransferase fer5 (427 aa).

A disordered region spans residues 1–24; the sequence is MTAATSVQPSPAPRQPGLRATFNP. His-342 is a binding site for substrate. Glu-380 serves as the catalytic Proton acceptor.

Belongs to the lysine N-acyltransferase mbtK family.

Its pathway is siderophore biosynthesis. In terms of biological role, acyltransferase; part of the gene cluster that mediates the biosynthesis of siderophore ferrichrome A which is contributing to organismal virulence. The first step of ferrichrome A biosynthesis is performed by the HMG-CoA synthase hcs1 which catalyzes the generation of HMG-CoA and CoA using acetoacetyl-CoA and acetyl-CoA as substrates. The enoyl-CoA isomerase/hydratase fer4 then catalyzes the conversion of hcs1-produced HMG-CoA to methylglutaconyl-CoA. The acyltransferase fer5 then fuses the fer4-generated methylglutaconyl-CoA with sid1-generated hydroxyornithine to yield methylglutaconyl hydroxyornithine. Methylglutaconyl hydroxyornithine is then available for use by the NRPS fer3 to generate ferrichrome A. This is Acyltransferase fer5 from Mycosarcoma maydis (Corn smut fungus).